Reading from the N-terminus, the 545-residue chain is Glutamine-dependent NAD(+) synthetase (545 aa).

The 243-residue stretch at 5 to 247 (LRIAMAQFDF…DQWLVVDYMR (243 aa)) folds into the CN hydrolase domain. Glu46 acts as the Proton acceptor; for glutaminase activity in catalysis. Lys113 functions as the For glutaminase activity in the catalytic mechanism. Tyr119 lines the L-glutamine pocket. Cys151 functions as the Nucleophile; for glutaminase activity in the catalytic mechanism. 2 residues coordinate L-glutamine: Ser177 and Lys183. Positions 269–545 (VWRAVVRGVQ…RYPISNAYRG (277 aa)) are ligase. 292–299 (GLSGGIDS) is an ATP binding site. Asn375 is a deamido-NAD(+) binding site. Thr399 contacts ATP. Positions 404 and 516 each coordinate deamido-NAD(+).

It in the C-terminal section; belongs to the NAD synthetase family.

The catalysed reaction is deamido-NAD(+) + L-glutamine + ATP + H2O = L-glutamate + AMP + diphosphate + NAD(+) + H(+). Its pathway is cofactor biosynthesis; NAD(+) biosynthesis; NAD(+) from deamido-NAD(+) (L-Gln route): step 1/1. Catalyzes the ATP-dependent amidation of deamido-NAD to form NAD. Uses L-glutamine as a nitrogen source. The sequence is that of Glutamine-dependent NAD(+) synthetase from Xylella fastidiosa (strain Temecula1 / ATCC 700964).